Here is a 101-residue protein sequence, read N- to C-terminus: Interleukin-8 (101 aa).

The first 22 residues, 1-22, serve as a signal peptide directing secretion; sequence MTSKLAVALLAAFLLSAALCEG. Residue arginine 27 is modified to Citrulline. Disulfide bonds link cysteine 34-cysteine 61 and cysteine 36-cysteine 77.

It belongs to the intercrine alpha (chemokine CxC) family. As to quaternary structure, homodimer. Interacts with TNFAIP6 (via Link domain); this interaction interferes with chemokine binding to glycosaminoglycans. Post-translationally, citrullination at Arg-27 prevents proteolysis, and dampens tissue inflammation, it also enhances leukocytosis, possibly through impaired chemokine clearance from the blood circulation.

The protein resides in the secreted. Functionally, chemotactic factor that mediates inflammatory response by attracting neutrophils, basophils, and T-cells to clear pathogens and protect the host from infection. Also plays an important role in neutrophil activation. Released in response to an inflammatory stimulus, exerts its effect by binding to the G-protein-coupled receptors CXCR1 and CXCR2, primarily found in neutrophils, monocytes and endothelial cells. G-protein heterotrimer (alpha, beta, gamma subunits) constitutively binds to CXCR1/CXCR2 receptor and activation by IL8 leads to beta and gamma subunits release from Galpha (GNAI2 in neutrophils) and activation of several downstream signaling pathways including PI3K and MAPK pathways. The protein is Interleukin-8 (CXCL8) of Macaca mulatta (Rhesus macaque).